Consider the following 205-residue polypeptide: Meiotic nuclear division protein 1 homolog (205 aa).

Positions 79 to 147 form a coiled coil; that stretch reads LHARKRKLET…CADLEKYKEC (69 aa).

This sequence belongs to the MND1 family.

The protein localises to the nucleus. Its function is as follows. Required for proper homologous chromosome pairing and efficient cross-over and intragenic recombination during meiosis. Stimulates both dmc1- and rad51-mediated homologous strand assimilation, which is required for the resolution of meiotic double-strand breaks. The sequence is that of Meiotic nuclear division protein 1 homolog from Xenopus laevis (African clawed frog).